The primary structure comprises 860 residues: Leucine--tRNA ligase (860 aa).

Residues 42 to 52 (PYPSGRLHMGH) carry the 'HIGH' region motif. A 'KMSKS' region motif is present at residues 619–623 (KMSKS). An ATP-binding site is contributed by K622.

This sequence belongs to the class-I aminoacyl-tRNA synthetase family.

The protein resides in the cytoplasm. The enzyme catalyses tRNA(Leu) + L-leucine + ATP = L-leucyl-tRNA(Leu) + AMP + diphosphate. This is Leucine--tRNA ligase from Sodalis glossinidius (strain morsitans).